The chain runs to 156 residues: uncharacterized protein (156 aa).

Transmembrane regions (helical) follow at residues 46–66 (GLVL…AGVV) and 114–134 (IIDI…IVAL).

It is found in the cell membrane. This is an uncharacterized protein from Haemophilus influenzae (strain ATCC 51907 / DSM 11121 / KW20 / Rd).